The primary structure comprises 95 residues: Protein TusB (95 aa).

It belongs to the DsrH/TusB family. Heterohexamer, formed by a dimer of trimers. The hexameric TusBCD complex contains 2 copies each of TusB, TusC and TusD. The TusBCD complex interacts with TusE.

It is found in the cytoplasm. Part of a sulfur-relay system required for 2-thiolation of 5-methylaminomethyl-2-thiouridine (mnm(5)s(2)U) at tRNA wobble positions. This is Protein TusB from Escherichia coli (strain SMS-3-5 / SECEC).